Consider the following 1427-residue polypeptide: MDSLHVSSTSVLVDVVEAVETATSLVVDTAEAVATEQATPTAVISNALARSAYAAHTSLSYLAWAFGLWFLRLIGWVCYGIPTYVLGLLGRTINISLQFSSLLLILIALVTVVVAVVRYKYLTVYSRLPQEQPRQEPEIDMYDESDNEDEKTGFANYFDEFLSAVKIFGYLERPVFHELTRHMQTWKLSADEMVPLDDEQGFSVVVEGTVQVFAKQSSFVQNPTSVPDSRKEDSIMFNGERYTLLSEIKNGAPLTSLFNILSLFTDDLQLHKNFDSAVNSPMTSASDVPNMSLSSDGSDDLQKGEPQFGEPRLSEKPAAKLSVTVRAATDSTIAIIPAAAFRRITKKFPQATAHIVQVILTRFQRVTFQTGHHYFGLTPEIFQTEVNLNSHARNELPGYLREGAVKKLNQVYDASQMGGRPKKYTVTLNKKNKGKGSRRQRFSVQLNNQGHLNSQSRMVSLDSLEAVGDHMNPGDLLTNVPLSRQGRPVFELSSVKHKASIQNLSFSGNDDENEDTALRTALVEAIFKVLGIDRDSIQSSIMAVKTMSNTASPMFTGATTGGSSGSLGEELRSRRTGQDSLGASHFGVGLPSERSQNSFYARSETSTSSVDEDSLMAAPFDTIRNDVAQYMDVVLFKKDSLLIKQDDPTPGLYYLIDGVLEVGYTDHHKIYHDLYTVQPGGVGGYIGSILGHRSFADLRARTDVYAGFLPRAAIERMSDKYPMVHLTMAKSLTKVLSRLLLHLDFAMEWVQVRAGQKIYKEGQEADAIYIVLNGRVRSVAETKGDSGIVGGESGDAKDGKSHRKNLTSIGEYGKGESVGELEVLTLTRRPSTLVAIRDAELAKIPRALFESLALHYPSITFEISRIVASRVRTLMEDSAPIPRRMHTFDMAAHHDSYLTIAVVPISQDVDVSEFGRRLYNGMQAVGREACHLNHASVLNHMGRHAFNPLGKLKLSGFLDDIEDRYQTVLYVADTPPGSSWTHTCISQADCVLLVADARSEPDIGEYERVLVKMRTTARTEMVLIHPERYVPPGLTSAWLKPRVWVHTHHHVQMDLPRHEADVLASIRKMKRTGTLANLKNKVQTIQEEFRSMYRPKANIYSTSSANKDDFNRLARILSGQAIGLVLGGGGARGISHIGIIKALEDSGIPIDFVGGTSIGSFIGGLYAKEYDLVPIYGRAKKFSGRVSSLWRMALDLTYPATSYTTGHEFNRGIWKAFGDSRIEDFWLRYFTNTTNITHSRMEIHTSGYAWRYIRASMSLAGLLPPLTDNGSMLLDGGYVDNLPVSEMKAQGASVVFAVDVGSIDDTTPMNYGDSLSGAWVMWNRWNPFGRHPNVPNLAEIQARLAYVSSVGALEKAKHTPGVIYMRPPIDDFATLDFAKFLDIYRVGNKYGHKFLTELREDGKFPAIPGMENVKTKHKRTIARRNSI.

Residues M1 to S60 are Cytoplasmic-facing. Residues Y61 to I81 form a helical membrane-spanning segment. The Lumenal portion of the chain corresponds to P82–S96. Residues L97–V117 form a helical membrane-spanning segment. At R118–I1427 the chain is on the cytoplasmic side. The span at P281–D296 shows a compositional bias: polar residues. Residues P281–E315 form a disordered region. Residues L615–V735 and S731–R870 contribute to the a nucleoside 3',5'-cyclic phosphate site. The disordered stretch occupies residues G787–T807. Residues L1124–K1288 enclose the PNPLA domain. The GXGXXG signature appears at G1128–G1133. The GXSXG signature appears at G1155–G1159. Catalysis depends on S1157, which acts as the Nucleophile. D1275 acts as the Proton acceptor in catalysis. The DGA/G motif lies at D1275–G1277.

This sequence belongs to the NTE family.

It localises to the endoplasmic reticulum membrane. The catalysed reaction is a 1-acyl-sn-glycero-3-phosphocholine + H2O = sn-glycerol 3-phosphocholine + a fatty acid + H(+). Inhibited by organophosphorus esters. Intracellular phospholipase B that catalyzes the double deacylation of phosphatidylcholine (PC) to glycerophosphocholine (GroPCho). Plays an important role in membrane lipid homeostasis. Responsible for the rapid PC turnover in response to inositol, elevated temperatures, or when choline is present in the growth medium. The sequence is that of Lysophospholipase NTE1 (NTE1) from Yarrowia lipolytica (strain CLIB 122 / E 150) (Yeast).